A 229-amino-acid chain; its full sequence is Cytidylate kinase (229 aa).

15-23 is an ATP binding site; it reads GPAASGKST.

It belongs to the cytidylate kinase family. Type 1 subfamily.

It is found in the cytoplasm. It catalyses the reaction CMP + ATP = CDP + ADP. The catalysed reaction is dCMP + ATP = dCDP + ADP. In Herpetosiphon aurantiacus (strain ATCC 23779 / DSM 785 / 114-95), this protein is Cytidylate kinase.